The following is a 329-amino-acid chain: uncharacterized protein (329 aa).

An SIS domain is found at 37–180 (LAEKILGHSG…AMLLFHSRGV (144 aa)). 52–57 (GVGKSG) provides a ligand contact to ATP. 2 CBS domains span residues 206–265 (MFPK…GGEV) and 274–329 (MTAN…AGLL).

Belongs to the SIS family. GutQ/KpsF subfamily.

This is an uncharacterized protein from Chlamydia pneumoniae (Chlamydophila pneumoniae).